The primary structure comprises 235 residues: MDWLMGKSKAKPNGKKPAAEEKKVYLEPEHTKSRITDFEFKELVVLPREIDLNEWLASNTTTFFHHINLQYSTISEFCTGETCQTMAVCNTQYYWYDERGKKVKCTAPQYVDFVMSSVQKLVTDEDVFPTKYGREFPSSFESLVKKICKYLFHVLGHIYWAHFKETLALELHGHLNTLYVHFILFAREFNLLDPKETAVMDDLTEVLCSSPGNSGATGDGANSGASGAQNHVKER.

Residues 1–22 are disordered; the sequence is MDWLMGKSKAKPNGKKPAAEEK. Residues Cys78, Cys83, His157, and His162 each coordinate Zn(2+). Residues 213 to 235 are disordered; sequence NSGATGDGANSGASGAQNHVKER.

It belongs to the MOB1/phocein family. In terms of assembly, binds STK38 and STK38L. Phosphorylated.

It is found in the nucleus. The protein localises to the cytoplasm. Its subcellular location is the perinuclear region. Functionally, stimulates the autophosphorylation and kinase activity of STK38 and STK38L. The chain is MOB kinase activator 2 (Mob2) from Mus musculus (Mouse).